The following is a 632-amino-acid chain: Transcription factor tazR (632 aa).

The segment at residues 20–47 (CNECRARKLRCDRVRPTCGTCESLGVTC) is a DNA-binding region (zn(2)-C6 fungal-type). The segment at 77–130 (WNGQQKAAGGSPGESPPCSEGGQTLRAVSESTSDGVHDEDHANGARPPSSQSSI) is disordered.

It localises to the nucleus. Functionally, transcription factor that regulates the expression of the gene cluster that mediates the biosynthesis of azaterrilone A and other azaphilones, a class of fungal metabolites characterized by a highly oxygenated pyrano-quinone bicyclic core and exhibiting a broad range of bioactivities. This is Transcription factor tazR from Aspergillus terreus (strain NIH 2624 / FGSC A1156).